We begin with the raw amino-acid sequence, 190 residues long: Segregation and condensation protein B (190 aa).

It belongs to the ScpB family. In terms of assembly, homodimer. Homodimerization may be required to stabilize the binding of ScpA to the Smc head domains. Component of a cohesin-like complex composed of ScpA, ScpB and the Smc homodimer, in which ScpA and ScpB bind to the head domain of Smc. The presence of the three proteins is required for the association of the complex with DNA.

It localises to the cytoplasm. Its function is as follows. Participates in chromosomal partition during cell division. May act via the formation of a condensin-like complex containing Smc and ScpA that pull DNA away from mid-cell into both cell halves. This is Segregation and condensation protein B from Bacillus cereus (strain AH187).